The following is a 275-amino-acid chain: Protein CIMAP1C (275 aa).

2 STPGR repeats span residues 200-225 and 236-261; these read PGPA…MAKR and PGPG…MGIK.

The protein belongs to the CIMAP family.

The protein is Protein CIMAP1C (CIMAP1C) of Mus musculus (Mouse).